Reading from the N-terminus, the 313-residue chain is D-alanine--D-alanine ligase (313 aa).

The region spanning Lys111–Ala306 is the ATP-grasp domain. Ala137 to Thr192 is a binding site for ATP. Mg(2+) contacts are provided by Asp260, Glu273, and Asn275.

This sequence belongs to the D-alanine--D-alanine ligase family. It depends on Mg(2+) as a cofactor. Mn(2+) is required as a cofactor.

Its subcellular location is the cytoplasm. The catalysed reaction is 2 D-alanine + ATP = D-alanyl-D-alanine + ADP + phosphate + H(+). It functions in the pathway cell wall biogenesis; peptidoglycan biosynthesis. Functionally, cell wall formation. This chain is D-alanine--D-alanine ligase, found in Ectopseudomonas mendocina (strain ymp) (Pseudomonas mendocina).